Reading from the N-terminus, the 421-residue chain is Solute carrier family 35 member F3 (421 aa).

The disordered stretch occupies residues 25-53; sequence EGEERPREPPGPAEAQAPAGTEAGGRTSR. Positions 37-49 are enriched in low complexity; it reads AEAQAPAGTEAGG. 10 helical membrane-spanning segments follow: residues 66 to 86, 98 to 118, 149 to 169, 179 to 199, 208 to 228, 232 to 252, 266 to 286, 305 to 325, 326 to 346, and 352 to 372; these read VFWG…STQL, FTLT…YYAG, VFFT…YLYL, DVSV…WIVL, IVAA…DGFH, VIGI…KVLF, LFLS…PVIL, LCGF…GIAV, TYPT…AVVD, and IVFN…FLLL. Residues 394–421 are disordered; that stretch reads KEETAESSGDLGTGPQSRSRRARPSFAR. Positions 411–421 are enriched in basic residues; sequence RSRRARPSFAR.

It belongs to the SLC35F solute transporter family.

Its subcellular location is the membrane. The enzyme catalyses thiamine(in) = thiamine(out). Mediates thiamine transport. The chain is Solute carrier family 35 member F3 (Slc35f3) from Mus musculus (Mouse).